Consider the following 271-residue polypeptide: MANYTAADVKRLRELTGAGMMDSKNALVEAEGDFDKAVELLRIKGAKDVGKRAERATAEGLVAAKDGALIELNSETDFVAKNAEFQAVAEQIVAAAAAAKATDVDALKAAKLGDTTVEQTIADLSAKIGEKLELRRATYFDGQVETYLHKRAADLPPAVGVLVEYTGDDKSAAHAVALQIAALKAKYLTREDVPEDIVANERRIAEETARAEGKPEQALTKIVEGRVTGFYKDVVLLDQPSVSDNKKSVKALLDEAGVTVTRFARFEVGQA.

An involved in Mg(2+) ion dislocation from EF-Tu region spans residues 76-79; it reads TDFV.

The protein belongs to the EF-Ts family.

The protein localises to the cytoplasm. Associates with the EF-Tu.GDP complex and induces the exchange of GDP to GTP. It remains bound to the aminoacyl-tRNA.EF-Tu.GTP complex up to the GTP hydrolysis stage on the ribosome. This chain is Elongation factor Ts, found in Mycolicibacterium gilvum (strain PYR-GCK) (Mycobacterium gilvum (strain PYR-GCK)).